The following is a 650-amino-acid chain: MICOS complex subunit MIC60, mitochondrial (650 aa).

A mitochondrion-targeting transit peptide spans 1 to 34 (MLRKSVLELSSRLSIKRFPRNLGAQRFHLSSSRN). The tract at residues 26–74 (RFHLSSSRNASTSGKNGLPGAKPVGKPDASKVDPPKVTPPPPTKGNSSK) is disordered. Positions 28–40 (HLSSSRNASTSGK) are enriched in polar residues. The Mitochondrial matrix portion of the chain corresponds to 35–74 (ASTSGKNGLPGAKPVGKPDASKVDPPKVTPPPPTKGNSSK). A helical membrane pass occupies residues 75 to 95 (VVIGGVAIAGAFLVAYQTGYL). Residues 96-549 (DQYLGKEQQK…FDTLKGTLRH (454 aa)) lie on the Mitochondrial intermembrane side of the membrane. 3 disordered regions span residues 121–168 (EAHH…ESDL), 239–267 (QSSSVHRESETESASPKDPAALKTPEDGI), and 284–304 (EGSDTESTGSSSIGEQITKET). The span at 284 to 299 (EGSDTESTGSSSIGEQ) shows a compositional bias: low complexity. Coiled coils occupy residues 345–369 (AQVFAEELRALKEKYENELRDLRAR) and 396–430 (KAIQERMEDKLKAELEQKETEAQLALSKAEELAKA). A helical membrane pass occupies residues 550–570 (FSLIPPGGGGILAHSLAHVAS). At 571-650 (SLKFKEVDQA…QSYATCVSLT (80 aa)) the chain is on the mitochondrial matrix side.

This sequence belongs to the MICOS complex subunit Mic60 family. Component of the mitochondrial contact site and cristae organizing system (MICOS) complex. The MICOS complex associates with mitochondrial outer membrane proteins. Present in a large lipid-enriched complex called mitochondrial transmembrane lipoprotein (MTL) complex made of proteins located in the two mitochondrial membranes, including the TOM complex and the core components of the MICOS complex and containing at least digalactosyldiacylglycerol (DGDG). Binds to TOM40-1. Component of a mitochondrial large protein complex that contains, at least, MIC60, DGS1, TOM40, TOM20 proteins, and petC/RISP.

The protein resides in the mitochondrion inner membrane. Its function is as follows. Component of the MICOS complex, a large protein complex of the mitochondrial inner membrane that plays crucial roles in the maintenance of crista junctions, inner membrane architecture, and formation of contact sites to the outer membrane. Plays a role in keeping cristae membranes connected to the inner boundary membrane. Also promotes protein import via the mitochondrial intermembrane space assembly (MIA) pathway. Involved in the maintenance of mitochondria morphology. Binds to glycerolipids such as cardiolipin (CL). Contributes to the export of phosphatidylethanolamine (PE) from mitochondria and to the import of galactoglycerolipids from plastids during phosphate (Pi) starvation. Promotes lipid desorption from membranes, likely as an initial step for lipid transfer, and regulates probably the tethering between the inner and outer membranes of mitochondria by binding to TOM40 proteins. The chain is MICOS complex subunit MIC60, mitochondrial from Arabidopsis thaliana (Mouse-ear cress).